We begin with the raw amino-acid sequence, 520 residues long: Cobyric acid synthase (520 aa).

Residues 254–465 (ELDIAVVRLP…IHGILDNDGL (212 aa)) form the GATase cobBQ-type domain. The Nucleophile role is filled by cysteine 335. The active site involves histidine 457.

The protein belongs to the CobB/CobQ family. CobQ subfamily.

The protein operates within cofactor biosynthesis; adenosylcobalamin biosynthesis. In terms of biological role, catalyzes amidations at positions B, D, E, and G on adenosylcobyrinic A,C-diamide. NH(2) groups are provided by glutamine, and one molecule of ATP is hydrogenolyzed for each amidation. The polypeptide is Cobyric acid synthase (Sorangium cellulosum (strain So ce56) (Polyangium cellulosum (strain So ce56))).